Reading from the N-terminus, the 441-residue chain is tRNA pseudouridine synthase Pus10 (441 aa).

Aspartate 268 functions as the Nucleophile in the catalytic mechanism. Substrate contacts are provided by tyrosine 333 and tyrosine 405.

This sequence belongs to the pseudouridine synthase Pus10 family.

It catalyses the reaction uridine(54) in tRNA = pseudouridine(54) in tRNA. It carries out the reaction uridine(55) in tRNA = pseudouridine(55) in tRNA. Its function is as follows. Responsible for synthesis of pseudouridine from uracil-54 and uracil-55 in the psi GC loop of transfer RNAs. In Thermosphaera aggregans (strain DSM 11486 / M11TL), this protein is tRNA pseudouridine synthase Pus10.